Consider the following 98-residue polypeptide: uncharacterized protein (98 aa).

The protein belongs to the CFAP97 family.

This is an uncharacterized protein from Homo sapiens (Human).